The sequence spans 208 residues: Small ribosomal subunit protein uS4 (208 aa).

Residues 98 to 159 enclose the S4 RNA-binding domain; it reads LRLDNVAYRL…AARTHIRIAA (62 aa).

Belongs to the universal ribosomal protein uS4 family. Part of the 30S ribosomal subunit. Contacts protein S5. The interaction surface between S4 and S5 is involved in control of translational fidelity.

Its function is as follows. One of the primary rRNA binding proteins, it binds directly to 16S rRNA where it nucleates assembly of the body of the 30S subunit. In terms of biological role, with S5 and S12 plays an important role in translational accuracy. This is Small ribosomal subunit protein uS4 from Acidithiobacillus ferrooxidans (strain ATCC 23270 / DSM 14882 / CIP 104768 / NCIMB 8455) (Ferrobacillus ferrooxidans (strain ATCC 23270)).